A 253-amino-acid chain; its full sequence is Putative glutamine amidotransferase PB2B2.05 (253 aa).

One can recognise a Glutamine amidotransferase type-1 domain in the interval 5–228 (IIALSVGFSN…INRSKWHMKQ (224 aa)). The active-site Nucleophile is the C100. Active-site residues include H200 and E202.

The protein localises to the cytoplasm. It is found in the nucleus. The sequence is that of Putative glutamine amidotransferase PB2B2.05 from Schizosaccharomyces pombe (strain 972 / ATCC 24843) (Fission yeast).